A 98-amino-acid chain; its full sequence is NADH-ubiquinone oxidoreductase chain 4L (98 aa).

The next 3 membrane-spanning stretches (helical) occupy residues 1 to 21, 26 to 46, and 56 to 76; these read MSPL…GLAF, LISA…PLSI, and FALV…TGLA.

Belongs to the complex I subunit 4L family. In terms of assembly, core subunit of respiratory chain NADH dehydrogenase (Complex I) which is composed of 45 different subunits.

It is found in the mitochondrion inner membrane. It catalyses the reaction a ubiquinone + NADH + 5 H(+)(in) = a ubiquinol + NAD(+) + 4 H(+)(out). Functionally, core subunit of the mitochondrial membrane respiratory chain NADH dehydrogenase (Complex I) which catalyzes electron transfer from NADH through the respiratory chain, using ubiquinone as an electron acceptor. Part of the enzyme membrane arm which is embedded in the lipid bilayer and involved in proton translocation. The chain is NADH-ubiquinone oxidoreductase chain 4L (MT-ND4L) from Gallus gallus (Chicken).